A 422-amino-acid chain; its full sequence is Proline--tRNA ligase (422 aa).

The protein belongs to the class-II aminoacyl-tRNA synthetase family. ProS type 2 subfamily. Homodimer.

The protein resides in the cytoplasm. It catalyses the reaction tRNA(Pro) + L-proline + ATP = L-prolyl-tRNA(Pro) + AMP + diphosphate. Its function is as follows. Catalyzes the attachment of proline to tRNA(Pro) in a two-step reaction: proline is first activated by ATP to form Pro-AMP and then transferred to the acceptor end of tRNA(Pro). The chain is Proline--tRNA ligase from Wolbachia sp. subsp. Drosophila simulans (strain wRi).